A 283-amino-acid chain; its full sequence is Tetraspanin-33 (283 aa).

Over 1–24 (MARRPGAPAAYGEDFSFVSPLVKY) the chain is Cytoplasmic. Residues 25 to 45 (LLFFFNMLFWVISMVMVAVGV) traverse the membrane as a helical segment. At 46–64 (YARLMKHEEAALACLAVDP) the chain is on the extracellular side. A helical transmembrane segment spans residues 65–85 (AILLIVVGILMFLLTFCGCIG). The Cytoplasmic segment spans residues 86 to 96 (SLRENICLLQT). The chain crosses the membrane as a helical span at residues 97–117 (FSLCLTVVFLLQLAAGVLGFV). Over 118-235 (FSDKVRGKVS…DRLVNWIHSN (118 aa)) the chain is Extracellular. Cystine bridges form between Cys156/Cys224, Cys157/Cys189, Cys173/Cys183, and Cys190/Cys203. A glycan (N-linked (GlcNAc...) asparagine) is linked at Asn172. The chain crosses the membrane as a helical span at residues 236 to 256 (LFVLGGVALGLAIPQLVGIML). Residues 257–283 (SMILVSQIKDQIKLQLYNQQHRADPWY) are Cytoplasmic-facing.

It belongs to the tetraspanin (TM4SF) family. As to quaternary structure, homodimer; disulfide-linked. Interacts (via extracellular domain) with ADAM10 (via extracellular domain). Interacts (via cytoplasmic domain) with PLEKHA7 (via WW domains); the interaction is dependent on PDZD11 being bound to PLEKHA7 and facilitates the docking of ADAM10 to zonula adherens.

The protein resides in the cell membrane. The protein localises to the cell junction. It localises to the adherens junction. Its subcellular location is the cytoplasm. Functionally, part of TspanC8 subgroup, composed of 6 members that interact with the transmembrane metalloprotease ADAM10. This interaction is required for ADAM10 exit from the endoplasmic reticulum and for enzymatic maturation and trafficking to the cell surface as well as substrate specificity. Different TspanC8/ADAM10 complexes have distinct substrates. Plays an important role in normal erythropoiesis. It has a role in the differentiation of erythroid progenitors. Negatively regulates ligand-induced Notch activity probably by regulating ADAM10 activity. Mediates docking of ADAM10 to zonula adherens by interacting with ADAM10 and, in a PDZD11-dependent manner, with the zonula adherens protein PLEKHA7. This Bos taurus (Bovine) protein is Tetraspanin-33 (TSPAN33).